The following is a 156-amino-acid chain: dCTP deaminase (156 aa).

Residues 79-84, D95, Q124, and Y138 each bind dCTP; that span reads RSSLAR.

Belongs to the dCTP deaminase family. In terms of assembly, homotrimer.

The catalysed reaction is dCTP + H2O + H(+) = dUTP + NH4(+). It functions in the pathway pyrimidine metabolism; dUMP biosynthesis; dUMP from dCTP (dUTP route): step 1/2. Catalyzes the deamination of dCTP to dUTP. The protein is dCTP deaminase of Pyrococcus furiosus (strain ATCC 43587 / DSM 3638 / JCM 8422 / Vc1).